The following is a 632-amino-acid chain: Myrcene synthase TPS3FN, chloroplastic (632 aa).

The N-terminal 55 residues, 1–55 (MHCMAVHQFSPSIVSSLPTISTYNNNHFCRFFTPKTSISPISKTKSKSSTCYPIQ), are a transit peptide targeting the chloroplast. The (2E)-geranyl diphosphate site is built by R343, D380, D384, R524, and D527. D380 and D384 together coordinate Mg(2+). The short motif at 380-384 (DDIYD) is the DDXXD motif element. Mg(2+)-binding residues include D527, T531, and E535.

The protein belongs to the terpene synthase family. Tpsb subfamily. Mg(2+) serves as cofactor. It depends on Mn(2+) as a cofactor. Expressed in glandular trichomes two to four weeks after flowering onset.

It localises to the plastid. It is found in the chloroplast. The enzyme catalyses (2E)-geranyl diphosphate = beta-myrcene + diphosphate. It participates in secondary metabolite biosynthesis; terpenoid biosynthesis. Its function is as follows. Involved in monoterpene (C10) olefins biosynthesis, constituants of cannabinoids and terpenoids-rich resins. Catalyzes strictly the conversion of (2E)-geranyl diphosphate to beta-myrcene. This is Myrcene synthase TPS3FN, chloroplastic from Cannabis sativa (Hemp).